The primary structure comprises 131 residues: Small ribosomal subunit protein uS8 (131 aa).

It belongs to the universal ribosomal protein uS8 family. In terms of assembly, part of the 30S ribosomal subunit. Contacts proteins S5 and S12.

One of the primary rRNA binding proteins, it binds directly to 16S rRNA central domain where it helps coordinate assembly of the platform of the 30S subunit. The protein is Small ribosomal subunit protein uS8 of Acidithiobacillus ferrooxidans (strain ATCC 23270 / DSM 14882 / CIP 104768 / NCIMB 8455) (Ferrobacillus ferrooxidans (strain ATCC 23270)).